A 283-amino-acid polypeptide reads, in one-letter code: Galactooligosaccharides transport system permease protein GanQ (283 aa).

6 helical membrane passes run L13–W33, I82–S102, L115–A135, I137–P157, I188–G208, and T248–L268. In terms of domain architecture, ABC transmembrane type-1 spans Y76–L268.

It belongs to the binding-protein-dependent transport system permease family. The complex is composed of two ATP-binding proteins (MsmX), two transmembrane proteins (GanP and GanQ) and a solute-binding protein (GanS).

It localises to the cell membrane. In terms of biological role, involved in galactan degradation. Part of the ABC transporter complex GanPQS involved in the uptake of galactooligosaccharides. Responsible for the translocation of the substrate across the membrane. The polypeptide is Galactooligosaccharides transport system permease protein GanQ (ganQ) (Bacillus subtilis (strain 168)).